Reading from the N-terminus, the 931-residue chain is Protein unc-45 homolog B (931 aa).

TPR repeat units lie at residues 6–39 (AAQLKEEGNRHFQLQDYKAATKSYSQALKLTKDK), 43–76 (ATLYRNRAACGLKMESYAQAASDASRAIDINSAD), and 77–110 (IKALYRRCQALEHLGKLDQAFKDVQRCATLEPRN). ARM repeat units lie at residues 169-208 (EAGAERIFQSNGVALLLQLMNTQRPELLLAAVRTLSGMCS), 211-250 (RARATAILHAVRIDRICSLMALENEEMSLAVCNLLQAIID), and 751-790 (DKLRQKIFKEKALPDIENYMFENHDQLRQAATECMCNMVL).

Interacts with HSP90 in an ATP-independent manner. Interacts with UBE4B; the interaction may target UNC45B for proteasomal degradation. Highly expressed in adult skeletal muscle and heart. Detected at intermediate levels in lung. Highly expressed in embryonic heart.

The protein resides in the cytoplasm. The protein localises to the myofibril. Its subcellular location is the sarcomere. It localises to the z line. It is found in the a band. The protein resides in the perinuclear region. The protein localises to the cytosol. Its function is as follows. Acts as a co-chaperone for HSP90 and is required for proper folding of the myosin motor domain. Plays a role in sarcomere formation during muscle cell development. Is necessary for normal early lens development. The chain is Protein unc-45 homolog B (Unc45b) from Mus musculus (Mouse).